The chain runs to 1054 residues: Calcium-transporting ATPase 2, endoplasmic reticulum-type (1054 aa).

At Met-1–Pro-53 the chain is on the cytoplasmic side. Residues Leu-54–Ala-74 form a helical membrane-spanning segment. At Phe-75 to Glu-98 the chain is on the lumenal side. A helical transmembrane segment spans residues Pro-99–Ser-118. Residues Asn-119–Leu-262 are Cytoplasmic-facing. Residues Asp-263–Met-282 traverse the membrane as a helical segment. Over Ile-283–Tyr-312 the chain is Lumenal. Residues Phe-313–Ala-330 traverse the membrane as a helical segment. Ca(2+) is bound by residues Val-321, Ala-322, Ile-324, and Glu-326. Residues Val-331–Met-782 are Cytoplasmic-facing. Asp-368 serves as the catalytic 4-aspartylphosphate intermediate. Residues Asp-727 and Asp-731 each coordinate Mg(2+). Residues Lys-783 to Leu-802 traverse the membrane as a helical segment. 2 residues coordinate Ca(2+): Asn-793 and Glu-796. The Lumenal segment spans residues Thr-803 to Met-812. The helical transmembrane segment at Ile-813–Gly-833 threads the bilayer. Residues Asn-821, Thr-824, and Asp-825 each coordinate Ca(2+). At Phe-834 to Leu-853 the chain is on the cytoplasmic side. The helical transmembrane segment at Ile-854–Ile-876 threads the bilayer. Residues Phe-877–Met-949 are Lumenal-facing. The chain crosses the membrane as a helical span at residues Thr-950–Ser-969. Glu-960 provides a ligand contact to Ca(2+). The Cytoplasmic portion of the chain corresponds to Glu-970 to Asn-982. Residues Pro-983–Tyr-1001 form a helical membrane-spanning segment. Topologically, residues Val-1002 to Phe-1016 are lumenal. A helical transmembrane segment spans residues Arg-1017–Lys-1037. Residues Phe-1038–Met-1054 are Cytoplasmic-facing.

Belongs to the cation transport ATPase (P-type) (TC 3.A.3) family. Type IIA subfamily.

It is found in the membrane. The enzyme catalyses Ca(2+)(in) + ATP + H2O = Ca(2+)(out) + ADP + phosphate + H(+). In terms of biological role, this magnesium-dependent enzyme catalyzes the hydrolysis of ATP coupled with the translocation of calcium from the cytosol to an endomembrane compartment. The protein is Calcium-transporting ATPase 2, endoplasmic reticulum-type (ECA2) of Arabidopsis thaliana (Mouse-ear cress).